Reading from the N-terminus, the 206-residue chain is Ribosomal RNA small subunit methyltransferase G (206 aa).

S-adenosyl-L-methionine is bound by residues glycine 74, leucine 79, 125–126 (VE), and arginine 140.

It belongs to the methyltransferase superfamily. RNA methyltransferase RsmG family.

The protein localises to the cytoplasm. It catalyses the reaction guanosine(527) in 16S rRNA + S-adenosyl-L-methionine = N(7)-methylguanosine(527) in 16S rRNA + S-adenosyl-L-homocysteine. Functionally, specifically methylates the N7 position of guanine in position 527 of 16S rRNA. This chain is Ribosomal RNA small subunit methyltransferase G, found in Shewanella sp. (strain MR-4).